We begin with the raw amino-acid sequence, 175 residues long: uncharacterized protein (175 aa).

The segment covering 1-14 (MNTSSRIQLPSSND) has biased composition (polar residues). Disordered stretches follow at residues 1-31 (MNTSSRIQLPSSNDAHVYDGRSNEPKASKRS) and 127-175 (ARSR…QSKR). Basic and acidic residues predominate over residues 16–27 (HVYDGRSNEPKA). The span at 130–149 (RASSVSNSRLNSRTNSSVSL) shows a compositional bias: low complexity. Residues 154 to 175 (GSSSWKNKIKNAVSNVTDQSKR) are compositionally biased toward polar residues.

It is found in the cytoplasm. It localises to the nucleus. This is an uncharacterized protein from Schizosaccharomyces pombe (strain 972 / ATCC 24843) (Fission yeast).